The following is a 211-amino-acid chain: DELTA-stichotoxin-Hmg2a (211 aa).

Positions 1-19 are cleaved as a signal peptide; sequence MNRLIVLFLIVTMICATIA. The propeptide occupies 20-34; sequence VPSREELEDQKEYKR. Positions 37-46 are plays an important role in the hemolytic activity; that stretch reads ALAGTIIEGA. The tract at residues 45–64 is N-terminal region; it reads GASLGFQILDKVLGELGKVS. The phosphocholine site is built by Ser-88, Val-121, Ser-139, Pro-141, Tyr-167, Tyr-171, and Tyr-172. Positions 139–154 are trp-rich region, which is important for the binding to lipid membrane; the sequence is SVPFDYNFYSNWWDVK. Positions 177–179 match the Cell attachment site, crucial for protein stability motif; the sequence is RGD.

This sequence belongs to the actinoporin family. Sea anemone subfamily. Octamer or nonamer in membranes. Monomer in the soluble state.

Its subcellular location is the secreted. It is found in the nematocyst. The protein resides in the target cell membrane. Pore-forming protein that forms cations-selective hydrophilic pores of around 1 nm and causes cardiac stimulation and cytolysis. Pore formation is a multi-step process that involves specific recognition of membrane sphingomyelin (but neither cholesterol nor phosphatidylcholine) using aromatic rich region and adjacent phosphocholine (POC) binding site, firm binding to the membrane (mainly driven by hydrophobic interactions) accompanied by the transfer of the N-terminal region to the lipid-water interface and finally pore formation after oligomerization of monomers. In Heteractis magnifica (Magnificent sea anemone), this protein is DELTA-stichotoxin-Hmg2a.